Consider the following 373-residue polypeptide: Flagellar P-ring protein (373 aa).

The first 26 residues, 1 to 26 (MKLFFRFLTLVAVLAMSLADVAPAWA), serve as a signal peptide directing secretion.

This sequence belongs to the FlgI family. In terms of assembly, the basal body constitutes a major portion of the flagellar organelle and consists of four rings (L,P,S, and M) mounted on a central rod.

It localises to the periplasm. The protein resides in the bacterial flagellum basal body. Functionally, assembles around the rod to form the L-ring and probably protects the motor/basal body from shearing forces during rotation. The sequence is that of Flagellar P-ring protein from Rhizobium leguminosarum bv. trifolii (strain WSM2304).